The following is a 414-amino-acid chain: Serine--tRNA ligase (414 aa).

Residue Thr-230–Glu-232 coordinates L-serine. Arg-261–Glu-263 provides a ligand contact to ATP. An L-serine-binding site is contributed by Glu-284. Residue Glu-348–Ser-351 coordinates ATP. Position 382 (Ser-382) interacts with L-serine.

Belongs to the class-II aminoacyl-tRNA synthetase family. Type-1 seryl-tRNA synthetase subfamily. In terms of assembly, homodimer. The tRNA molecule binds across the dimer.

It is found in the cytoplasm. It carries out the reaction tRNA(Ser) + L-serine + ATP = L-seryl-tRNA(Ser) + AMP + diphosphate + H(+). The catalysed reaction is tRNA(Sec) + L-serine + ATP = L-seryl-tRNA(Sec) + AMP + diphosphate + H(+). The protein operates within aminoacyl-tRNA biosynthesis; selenocysteinyl-tRNA(Sec) biosynthesis; L-seryl-tRNA(Sec) from L-serine and tRNA(Sec): step 1/1. Its function is as follows. Catalyzes the attachment of serine to tRNA(Ser). Is also able to aminoacylate tRNA(Sec) with serine, to form the misacylated tRNA L-seryl-tRNA(Sec), which will be further converted into selenocysteinyl-tRNA(Sec). This Nitratiruptor sp. (strain SB155-2) protein is Serine--tRNA ligase.